A 586-amino-acid chain; its full sequence is Exopolysaccharide phosphotransferase SCO6023 (586 aa).

The protein belongs to the stealth family.

The protein is Exopolysaccharide phosphotransferase SCO6023 of Streptomyces coelicolor (strain ATCC BAA-471 / A3(2) / M145).